We begin with the raw amino-acid sequence, 431 residues long: Glycerol-3-phosphate dehydrogenase [NAD(P)+] (431 aa).

Positions 1–19 are enriched in polar residues; that stretch reads MTSANDKSTDTNVDSTQAE. A disordered region spans residues 1 to 25; it reads MTSANDKSTDTNVDSTQAEQKMAEK. Residues Ser-79, Phe-80, Arg-100, and Lys-173 each coordinate NADPH. Sn-glycerol 3-phosphate-binding residues include Lys-173 and Gly-201. Residue Ala-205 coordinates NADPH. Residues Lys-256, Asp-309, Ser-319, Arg-320, and Asn-321 each contribute to the sn-glycerol 3-phosphate site. The active-site Proton acceptor is the Lys-256. Arg-320 contacts NADPH. Glu-346 is an NADPH binding site.

It belongs to the NAD-dependent glycerol-3-phosphate dehydrogenase family.

The protein resides in the cytoplasm. The enzyme catalyses sn-glycerol 3-phosphate + NAD(+) = dihydroxyacetone phosphate + NADH + H(+). It carries out the reaction sn-glycerol 3-phosphate + NADP(+) = dihydroxyacetone phosphate + NADPH + H(+). It participates in membrane lipid metabolism; glycerophospholipid metabolism. In terms of biological role, catalyzes the reduction of the glycolytic intermediate dihydroxyacetone phosphate (DHAP) to sn-glycerol 3-phosphate (G3P), the key precursor for phospholipid synthesis. The polypeptide is Glycerol-3-phosphate dehydrogenase [NAD(P)+] (Psychrobacter arcticus (strain DSM 17307 / VKM B-2377 / 273-4)).